Reading from the N-terminus, the 744-residue chain is Protein zyg-11 homolog B (744 aa).

3 LRR repeats span residues 185–208 (LPRL…LACK), 216–236 (MHHL…VREL), and 237–261 (KHLN…LLEQ).

Belongs to the zyg-11 family. As to quaternary structure, interacts with ELOC/Elongin C. Part of an E3 ubiquitin ligase complex including ZYG11B, CUL2 and Elongin BC.

Its function is as follows. Serves as substrate adapter subunit in the E3 ubiquitin ligase complex ZYG11B-CUL2-Elongin BC. Acts redudantly with ZER1 to target substrates bearing N-terminal glycine degrons for proteasomal degradation. Involved in the clearance of proteolytic fragments generated by caspase cleavage during apoptosis since N-terminal glycine degrons are strongly enriched at caspase cleavage sites. Also important in the quality control of protein N-myristoylation in which N-terminal glycine degrons are conditionally exposed after a failure of N-myristoylation. This Mus musculus (Mouse) protein is Protein zyg-11 homolog B.